Here is a 499-residue protein sequence, read N- to C-terminus: Serine/threonine-protein phosphatase 5 (499 aa).

The segment at 1–24 (MAMAEGERTECAETPRDEPPADGT) is disordered. N-acetylalanine is present on A2. 3 TPR repeats span residues 28–61 (AEEL…NPGN), 62–95 (AIYY…DKKY), and 96–129 (IKGY…KPND). Residues 184–499 (GKVTITFMKD…ANTLLQLGMM (316 aa)) are catalytic. Residues D242, H244, and D271 each contribute to the Mn(2+) site. H244 serves as a coordination point for substrate. Substrate is bound by residues R275 and 303–304 (NH). A Mn(2+)-binding site is contributed by N303. The Proton donor/acceptor role is filled by H304. H352 lines the Mn(2+) pocket. Substrate is bound by residues R400 and H427. Mn(2+) is bound at residue H427. The interval 495–499 (QLGMM) is required for autoinhibition.

It belongs to the PPP phosphatase family. PP-5 (PP-T) subfamily. Probably forms a complex composed of chaperones HSP90 and HSP70, co-chaperones STIP1/HOP, CDC37, PPP5C, PTGES3/p23, TSC1 and client protein TSC2. Probably forms a complex composed of chaperones HSP90 and HSP70, co-chaperones CDC37, PPP5C, TSC1 and client protein TSC2, CDK4, AKT, RAF1 and NR3C1; this complex does not contain co-chaperones STIP1/HOP and PTGES3/p23. Part of a complex with HSP90/HSP90AA1 and steroid receptors. Interacts (via TPR repeats) with HSP90AA1 (via TPR repeat-binding motif) or HSPA1A/HSPA1B; the interaction is direct and activates the phosphatase activity. Dissociates from HSPA1A/HSPA1B and HSP90AA1 in response to arachidonic acid. Interacts with CPNE1 (via VWFA domain). Interacts with CDC16, CDC27. Interacts with KLHDC10 (via the 6 Kelch repeats); inhibits the phosphatase activity on MAP3K5. Interacts with ATM and ATR; both interactions are induced by DNA damage and enhance ATM and ATR kinase activity. Interacts with RAD17; reduced by DNA damage. Interacts with nuclear receptors such as NR3C1/GCR and PPARG (activated by agonist); regulates their transactivation activities. Interacts (via TPR repeats) with S100 proteins S100A1, S100A2, S100A6, S100B and S100P; the interactions are calcium-dependent, strongly activate PPP5C phosphatase activity and compete with HSP90AA1 and MAP3K5 interactions. Interacts with SMAD2 and SMAD3 but not with SMAD1; decreases SMAD3 phosphorylation and protein levels. Interacts (via TPR repeats) with CRY1 and CRY2; the interaction with CRY2 down-regulates the phosphatase activity on CSNK1E. Interacts (via TPR repeats) with the active form of RAC1, GNA12 or GNA13; these interactions activate the phosphatase activity and translocate PPP5C to the cell membrane. Interacts with FLCN. It depends on Mg(2+) as a cofactor. Mn(2+) serves as cofactor. In terms of processing, activated by at least two different proteolytic cleavages producing a 56 kDa and a 50 kDa form. In terms of tissue distribution, expressed in liver (at protein level) and brain, enriched in suprachiasmatic nuclei.

The protein resides in the nucleus. It localises to the cytoplasm. The protein localises to the cell membrane. It catalyses the reaction O-phospho-L-seryl-[protein] + H2O = L-seryl-[protein] + phosphate. It carries out the reaction O-phospho-L-threonyl-[protein] + H2O = L-threonyl-[protein] + phosphate. With respect to regulation, autoinhibited. In the autoinhibited state, the TPR domain interacts with the catalytic region and prevents substrate access to the catalytic pocket. Allosterically activated by various polyunsaturated fatty acids, free long-chain fatty-acids and long-chain fatty acyl-CoA esters, arachidonic acid being the most effective activator. HSP90A and probably RAC1, GNA12 and GNA13 can also release the autoinhibition by the TPR repeat. Activation by RAC1, GNA12 and GNA13 is synergistic with the one produced by fatty acids binding. Inhibited by okadaic acid. In terms of biological role, serine/threonine-protein phosphatase that dephosphorylates a myriad of proteins involved in different signaling pathways including the kinases CSNK1E, ASK1/MAP3K5, PRKDC and RAF1, the nuclear receptors NR3C1, PPARG, ESR1 and ESR2, SMAD proteins and TAU/MAPT. Implicated in wide ranging cellular processes, including apoptosis, differentiation, DNA damage response, cell survival, regulation of ion channels or circadian rhythms, in response to steroid and thyroid hormones, calcium, fatty acids, TGF-beta as well as oxidative and genotoxic stresses. Participates in the control of DNA damage response mechanisms such as checkpoint activation and DNA damage repair through, for instance, the regulation ATM/ATR-signaling and dephosphorylation of PRKDC and TP53BP1. Inhibits ASK1/MAP3K5-mediated apoptosis induced by oxidative stress. Plays a positive role in adipogenesis, mainly through the dephosphorylation and activation of PPARG transactivation function. Also dephosphorylates and inhibits the anti-adipogenic effect of NR3C1. Regulates the circadian rhythms, through the dephosphorylation and activation of CSNK1E. May modulate TGF-beta signaling pathway by the regulation of SMAD3 phosphorylation and protein expression levels. Dephosphorylates and may play a role in the regulation of TAU/MAPT. Through their dephosphorylation, may play a role in the regulation of ions channels such as KCNH2. Dephosphorylate FNIP1, disrupting interaction with HSP90AA1/Hsp90. In Mus musculus (Mouse), this protein is Serine/threonine-protein phosphatase 5 (Ppp5c).